The primary structure comprises 315 residues: Ribosomal RNA small subunit methyltransferase H (315 aa).

S-adenosyl-L-methionine is bound by residues 37 to 39 (GGH), Asp57, Phe83, Asp105, and Gln112.

It belongs to the methyltransferase superfamily. RsmH family.

The protein resides in the cytoplasm. The catalysed reaction is cytidine(1402) in 16S rRNA + S-adenosyl-L-methionine = N(4)-methylcytidine(1402) in 16S rRNA + S-adenosyl-L-homocysteine + H(+). Functionally, specifically methylates the N4 position of cytidine in position 1402 (C1402) of 16S rRNA. This is Ribosomal RNA small subunit methyltransferase H from Pseudomonas putida (strain W619).